Consider the following 508-residue polypeptide: Small ribosomal subunit protein uS3m (508 aa).

It belongs to the universal ribosomal protein uS3 family. As to quaternary structure, component of the mitochondrial small ribosomal subunit (mt-SSU). Mature N.crassa 74S mitochondrial ribosomes consist of a small (37S) and a large (54S) subunit. The 37S small subunit contains a 16S ribosomal RNA (16S mt-rRNA) and 32 different proteins. The 54S large subunit contains a 23S rRNA (23S mt-rRNA) and 42 different proteins. uS3m, uS4m and uS5m form the narrow entry site of the mRNA channel.

It is found in the mitochondrion. Functionally, component of the mitochondrial ribosome (mitoribosome), a dedicated translation machinery responsible for the synthesis of mitochondrial genome-encoded proteins, including at least some of the essential transmembrane subunits of the mitochondrial respiratory chain. The mitoribosomes are attached to the mitochondrial inner membrane and translation products are cotranslationally integrated into the membrane. uS3m is essential for mitochondrial protein synthesis and required for the maturation of small ribosomal subunits. This Neurospora crassa (strain ATCC 24698 / 74-OR23-1A / CBS 708.71 / DSM 1257 / FGSC 987) protein is Small ribosomal subunit protein uS3m (var1).